Reading from the N-terminus, the 451-residue chain is UDP-N-acetylmuramoylalanine--D-glutamate ligase (451 aa).

118–124 (GSNGKTT) provides a ligand contact to ATP.

It belongs to the MurCDEF family.

It localises to the cytoplasm. It catalyses the reaction UDP-N-acetyl-alpha-D-muramoyl-L-alanine + D-glutamate + ATP = UDP-N-acetyl-alpha-D-muramoyl-L-alanyl-D-glutamate + ADP + phosphate + H(+). It participates in cell wall biogenesis; peptidoglycan biosynthesis. Cell wall formation. Catalyzes the addition of glutamate to the nucleotide precursor UDP-N-acetylmuramoyl-L-alanine (UMA). This Shouchella clausii (strain KSM-K16) (Alkalihalobacillus clausii) protein is UDP-N-acetylmuramoylalanine--D-glutamate ligase.